A 1014-amino-acid chain; its full sequence is DNA translocase FtsK 2 (1014 aa).

A helical membrane pass occupies residues methionine 1–arginine 21. 3 disordered regions span residues glutamate 89–alanine 142, arginine 283–valine 318, and serine 487–glutamate 525. Over residues glutamate 121–aspartate 140 the composition is skewed to acidic residues. Polar residues predominate over residues aspartate 298–aspartate 307. In terms of domain architecture, FtsK spans glycine 662 to arginine 871. Glycine 682 to valine 687 is an ATP binding site.

This sequence belongs to the FtsK/SpoIIIE/SftA family. Homohexamer. Forms a ring that surrounds DNA.

The protein localises to the cell inner membrane. Functionally, essential cell division protein that coordinates cell division and chromosome segregation. The N-terminus is involved in assembly of the cell-division machinery. The C-terminus functions as a DNA motor that moves dsDNA in an ATP-dependent manner towards the dif recombination site, which is located within the replication terminus region. Translocation stops specifically at Xer-dif sites, where FtsK interacts with the Xer recombinase, allowing activation of chromosome unlinking by recombination. FtsK orienting polar sequences (KOPS) guide the direction of DNA translocation. FtsK can remove proteins from DNA as it translocates, but translocation stops specifically at XerCD-dif site, thereby preventing removal of XerC and XerD from dif. The protein is DNA translocase FtsK 2 (ftsK2) of Neisseria meningitidis serogroup A / serotype 4A (strain DSM 15465 / Z2491).